The sequence spans 482 residues: tRNA sulfurtransferase (482 aa).

The region spanning 61–165 is the THUMP domain; that stretch reads LAIRDALTRI…DDRLLLIKGR (105 aa). Residues 183 to 184, Lys-265, Gly-287, and Gln-296 contribute to the ATP site; that span reads LI. Residues Cys-344 and Cys-456 are joined by a disulfide bond. The region spanning 404–482 is the Rhodanese domain; sequence FGPNDVILDI…GFANVKVYRP (79 aa). The active-site Cysteine persulfide intermediate is Cys-456.

The protein belongs to the ThiI family.

Its subcellular location is the cytoplasm. It carries out the reaction [ThiI sulfur-carrier protein]-S-sulfanyl-L-cysteine + a uridine in tRNA + 2 reduced [2Fe-2S]-[ferredoxin] + ATP + H(+) = [ThiI sulfur-carrier protein]-L-cysteine + a 4-thiouridine in tRNA + 2 oxidized [2Fe-2S]-[ferredoxin] + AMP + diphosphate. It catalyses the reaction [ThiS sulfur-carrier protein]-C-terminal Gly-Gly-AMP + S-sulfanyl-L-cysteinyl-[cysteine desulfurase] + AH2 = [ThiS sulfur-carrier protein]-C-terminal-Gly-aminoethanethioate + L-cysteinyl-[cysteine desulfurase] + A + AMP + 2 H(+). It functions in the pathway cofactor biosynthesis; thiamine diphosphate biosynthesis. In terms of biological role, catalyzes the ATP-dependent transfer of a sulfur to tRNA to produce 4-thiouridine in position 8 of tRNAs, which functions as a near-UV photosensor. Also catalyzes the transfer of sulfur to the sulfur carrier protein ThiS, forming ThiS-thiocarboxylate. This is a step in the synthesis of thiazole, in the thiamine biosynthesis pathway. The sulfur is donated as persulfide by IscS. The chain is tRNA sulfurtransferase from Salmonella heidelberg (strain SL476).